Consider the following 653-residue polypeptide: Zinc finger CCCH domain-containing protein 54 (653 aa).

The interval 242 to 261 is disordered; that stretch reads NGGGGGGGSPARARRSNGLS. The segment at 260–287 adopts a C3H1-type zinc-finger fold; the sequence is LSTRRPCHYFSKGICKNGQNCHYSHHQV. The HTH OST-type domain maps to 313-396; the sequence is SLETLEMEIT…GQHSVVLAED (84 aa). The region spanning 422–497 is the RRM domain; that stretch reads HQIYLTFPAE…SRVLVKPYRE (76 aa). A coiled-coil region spans residues 537–565; it reads RLMRKQLAEKREMLLEMERRRATVRRLES. Residues 598–623 form a disordered region; sequence PSLASPDPLEIVSNSQAPPTQAGNIY. Over residues 609–620 the composition is skewed to polar residues; that stretch reads VSNSQAPPTQAG.

This is Zinc finger CCCH domain-containing protein 54 from Oryza sativa subsp. japonica (Rice).